The following is a 431-amino-acid chain: Trigger factor (431 aa).

One can recognise a PPIase FKBP-type domain in the interval 165–250 (GDTVVIDFDG…IHELKRKELP (86 aa)).

This sequence belongs to the FKBP-type PPIase family. Tig subfamily.

The protein localises to the cytoplasm. It catalyses the reaction [protein]-peptidylproline (omega=180) = [protein]-peptidylproline (omega=0). Involved in protein export. Acts as a chaperone by maintaining the newly synthesized protein in an open conformation. Functions as a peptidyl-prolyl cis-trans isomerase. The protein is Trigger factor of Leuconostoc citreum (strain KM20).